We begin with the raw amino-acid sequence, 236 residues long: Geranylgeranylglyceryl phosphate synthase (236 aa).

Lysine 13 provides a ligand contact to sn-glycerol 1-phosphate. Mg(2+)-binding residues include aspartate 15 and threonine 42. Sn-glycerol 1-phosphate is bound by residues 161–166, glycine 191, and 211–212; these read YVEYSG and GD.

It belongs to the GGGP/HepGP synthase family. Group I subfamily. It depends on Mg(2+) as a cofactor.

The protein localises to the cytoplasm. It carries out the reaction sn-glycerol 1-phosphate + (2E,6E,10E)-geranylgeranyl diphosphate = sn-3-O-(geranylgeranyl)glycerol 1-phosphate + diphosphate. It functions in the pathway membrane lipid metabolism; glycerophospholipid metabolism. In terms of biological role, prenyltransferase that catalyzes the transfer of the geranylgeranyl moiety of geranylgeranyl diphosphate (GGPP) to the C3 hydroxyl of sn-glycerol-1-phosphate (G1P). This reaction is the first ether-bond-formation step in the biosynthesis of archaeal membrane lipids. In Halobacterium salinarum (strain ATCC 700922 / JCM 11081 / NRC-1) (Halobacterium halobium), this protein is Geranylgeranylglyceryl phosphate synthase.